A 338-amino-acid polypeptide reads, in one-letter code: UbiA prenyltransferase domain-containing protein 1 (338 aa).

A2 is modified (N-acetylalanine). The next 8 membrane-spanning stretches (helical) occupy residues 83–103 (LLVG…LVNT), 134–154 (FGVF…YLSP), 160–180 (LALI…GIGF), 188–208 (LIIL…IQVG), 209–229 (SLAI…EAIL), 245–267 (IVTL…LLFL), 277–297 (THCT…FSLE), and 315–335 (LNLL…AGSL).

The protein belongs to the UbiA prenyltransferase family. Interacts with HMGCR and SOAT1. Ubiquitously expressed.

It is found in the endoplasmic reticulum membrane. It localises to the golgi apparatus membrane. The protein resides in the mitochondrion membrane. The protein localises to the cytoplasm. Its subcellular location is the nucleus. It catalyses the reaction menadiol + (2E,6E,10E)-geranylgeranyl diphosphate = menaquinol-4 + diphosphate. The enzyme catalyses all-trans-decaprenyl diphosphate + 4-hydroxybenzoate = 4-hydroxy-3-(all-trans-decaprenyl)benzoate + diphosphate. The protein operates within quinol/quinone metabolism; menaquinone biosynthesis. It functions in the pathway cofactor biosynthesis; ubiquinone biosynthesis. Its function is as follows. Prenyltransferase that mediates the formation of menaquinone-4 (MK-4) and coenzyme Q10. MK-4 is a vitamin K2 isoform present at high concentrations in the brain, kidney and pancreas, and is required for endothelial cell development. Mediates the conversion of phylloquinone (PK) into MK-4, probably by cleaving the side chain of phylloquinone (PK) to release 2-methyl-1,4-naphthoquinone (menadione; K3) and then prenylating it with geranylgeranyl pyrophosphate (GGPP) to form MK-4. Also plays a role in cardiovascular development independently of MK-4 biosynthesis, by acting as a coenzyme Q10 biosynthetic enzyme: coenzyme Q10, also named ubiquinone, plays an important antioxidant role in the cardiovascular system. Mediates biosynthesis of coenzyme Q10 in the Golgi membrane, leading to protect cardiovascular tissues from NOS3/eNOS-dependent oxidative stress. The protein is UbiA prenyltransferase domain-containing protein 1 of Homo sapiens (Human).